A 339-amino-acid chain; its full sequence is Methyltransferase ptaI (339 aa).

It belongs to the methyltransferase superfamily.

It functions in the pathway secondary metabolite biosynthesis. Its function is as follows. Methyltransferase; part of the gene cluster that mediates the biosynthesis of pestheic acid, a diphenyl ether which is a biosynthetic precursor of the unique chloropupukeananes. The biosynthesis initiates from condensation of acetate and malonate units catalyzed by the non-reducing PKS ptaA. As the ptaA protein is TE/CLC domain-deficient, hydrolysis and Claisen cyclization of the polyketide could be catalyzed by ptaB containing a beta-lactamase domain. The ptaB protein might hydrolyze the thioester bond between the ACP of ptaA and the intermediate to release atrochrysone carboxylic acid, which is spontaneously dehydrated to form endocrocin anthrone. Endocrocin anthrone is then converted to endocrocin, catalyzed by the anthrone oxygenase ptaC. Spontaneous decarboxylation of endocrocin occurs to generate emodin. An O-methyltransferase (ptaH or ptaI) could methylate emodin to form physcion. PtaJ could then catalyze the oxidative cleavage of physcion, and rotation of the intermediate could then afford desmethylisosulochrin. PtaF, a putative NADH-dependent oxidoreductase, might also participate in the oxidative cleavage step. Desmethylisosulochrin is then transformed by another O-methyltransferase (ptaH or ptaI) to form isosulochrin. Chlorination of isosulochrin by ptaM in the cyclohexadienone B ring then produces chloroisosulochrin. PtaE is responsible for the oxidative coupling reactions of both benzophenones isosulouchrin and chloroisosulochrin to RES-1214-1 and pestheic acid respectively, regardless of chlorination. This Pestalotiopsis fici (strain W106-1 / CGMCC3.15140) protein is Methyltransferase ptaI.